The sequence spans 289 residues: Cell division protein ZipA (289 aa).

Residue M1 is a topological domain, periplasmic. A helical membrane pass occupies residues 2–22 (DIGLREWLIVIGLIVIAGILF). Over 23–289 (DGWRRMRGGK…HERRSLMQKR (267 aa)) the chain is Cytoplasmic. The tract at residues 66 to 141 (REPSFDEQDL…KEREKAPAVA (76 aa)) is disordered. A compositionally biased stretch (basic and acidic residues) spans 81–99 (REAKERKGGKRQEEPRQGD). Residues 100–114 (LDLDEGLALEADPSD) show a composition bias toward acidic residues.

It belongs to the ZipA family. Interacts with FtsZ via their C-terminal domains.

It localises to the cell inner membrane. In terms of biological role, essential cell division protein that stabilizes the FtsZ protofilaments by cross-linking them and that serves as a cytoplasmic membrane anchor for the Z ring. Also required for the recruitment to the septal ring of downstream cell division proteins. This Pseudomonas aeruginosa (strain LESB58) protein is Cell division protein ZipA.